The primary structure comprises 768 residues: Probable beta-glucosidase M (768 aa).

Residues 1–19 (MHAIAGLTGFLAGVSLSYA) form the signal peptide. N-linked (GlcNAc...) asparagine glycosylation is found at asparagine 25, asparagine 72, and asparagine 259. The active site involves aspartate 287. N-linked (GlcNAc...) asparagine glycans are attached at residues asparagine 315, asparagine 322, asparagine 394, asparagine 434, asparagine 472, asparagine 543, and asparagine 651.

It belongs to the glycosyl hydrolase 3 family.

It localises to the secreted. The catalysed reaction is Hydrolysis of terminal, non-reducing beta-D-glucosyl residues with release of beta-D-glucose.. The protein operates within glycan metabolism; cellulose degradation. Functionally, beta-glucosidases are one of a number of cellulolytic enzymes involved in the degradation of cellulosic biomass. Catalyzes the last step releasing glucose from the inhibitory cellobiose. In Aspergillus flavus (strain ATCC 200026 / FGSC A1120 / IAM 13836 / NRRL 3357 / JCM 12722 / SRRC 167), this protein is Probable beta-glucosidase M (bglM).